The primary structure comprises 115 residues: T cell receptor delta variable 2 (115 aa).

The signal sequence occupies residues M1–S19. Positions P25 to T115 constitute an Ig-like domain. C42 and C111 are joined by a disulfide.

Gamma-delta TR is a heterodimer composed of a gamma and delta chain; disulfide-linked. The gamma-delta TR is associated with the transmembrane signaling CD3 coreceptor proteins following the stoichiometry: a single gamma-delta TR heterodimer associates with one CD3D-CD3E heterodimer, one CD3G-CD3E heterodimer and one CD247 homodimer forming a stable octameric structure. Upon activation, gamma-delta TR complex associates with FCER1G to initiate intracellular signaling.

It localises to the cell membrane. Its function is as follows. V region of the variable domain of T cell receptor (TR) delta chain that participates in the antigen recognition. Gamma-delta TRs recognize a variety of self and foreign non-peptide antigens frequently expressed at the epithelial boundaries between the host and external environment, including endogenous lipids presented by MH-like protein CD1D and phosphoantigens presented by butyrophilin-like molecule BTN3A1. Upon antigen recognition induces rapid, innate-like immune responses involved in pathogen clearance and tissue repair. Binding of gamma-delta TR complex to antigen triggers phosphorylation of immunoreceptor tyrosine-based activation motifs (ITAMs) in the CD3 chains by the LCK and FYN kinases, allowing the recruitment, phosphorylation, and activation of ZAP70 that facilitates phosphorylation of the scaffolding proteins LCP2 and LAT. This lead to the formation of a supramolecular signalosome that recruits the phospholipase PLCG1, resulting in calcium mobilization and ERK activation, ultimately leading to T cell expansion and differentiation into effector cells. Gamma-delta TRs are produced through somatic rearrangement of a limited repertoire of variable (V), diversity (D), and joining (J) genes. The potential diversity of gamma-delta TRs is conferred by the unique ability to rearrange (D) genes in tandem and to utilize all three reading frames. The combinatorial diversity is considerably increased by the sequence exonuclease trimming and random nucleotide (N) region additions which occur during the V-(D)-J rearrangements. The protein is T cell receptor delta variable 2 of Homo sapiens (Human).